A 130-amino-acid chain; its full sequence is Small ribosomal subunit protein uS11 (130 aa).

Belongs to the universal ribosomal protein uS11 family. In terms of assembly, part of the 30S ribosomal subunit. Interacts with proteins S7 and S18. Binds to IF-3.

Its function is as follows. Located on the platform of the 30S subunit, it bridges several disparate RNA helices of the 16S rRNA. Forms part of the Shine-Dalgarno cleft in the 70S ribosome. The polypeptide is Small ribosomal subunit protein uS11 (Syntrophobacter fumaroxidans (strain DSM 10017 / MPOB)).